The sequence spans 66 residues: Large ribosomal subunit protein bL31 (66 aa).

Zn(2+)-binding residues include Cys16, Cys18, Cys36, and Cys39.

This sequence belongs to the bacterial ribosomal protein bL31 family. Type A subfamily. In terms of assembly, part of the 50S ribosomal subunit. The cofactor is Zn(2+).

Functionally, binds the 23S rRNA. The sequence is that of Large ribosomal subunit protein bL31 from Geobacillus sp. (strain WCH70).